The following is an 81-amino-acid chain: Pyruvate synthase subunit PorD (81 aa).

The tract at residues 1 to 20 is disordered; sequence MESLGATVKEPGSTRKNKTG. 4Fe-4S ferredoxin-type domains are found at residues 25-54 and 51-80; these read FKPF…KEHE and KEHE…MERE. Residues Cys34, Cys37, Cys40, Cys44, Cys60, Cys63, Cys66, and Cys70 each contribute to the [4Fe-4S] cluster site.

In terms of assembly, heterotetramer of one alpha, one beta, one delta and one gamma chain. [4Fe-4S] cluster serves as cofactor.

The protein is Pyruvate synthase subunit PorD (porD) of Methanothermobacter marburgensis (strain ATCC BAA-927 / DSM 2133 / JCM 14651 / NBRC 100331 / OCM 82 / Marburg) (Methanobacterium thermoautotrophicum).